The primary structure comprises 655 residues: Bifunctional lysine-specific demethylase and histidyl-hydroxylase NO66 (655 aa).

Polar residues predominate over residues 1-16 (MEKVTNSAAAKPQGNN). Disordered stretches follow at residues 1–48 (MEKV…LSDM) and 67–122 (EDTD…QGAS). Positions 76 to 86 (STSSKEAAAAK) are enriched in low complexity. Basic and acidic residues predominate over residues 87 to 96 (TADHERRLQA). Ser-131 bears the Phosphoserine mark. Position 137 is a phosphothreonine (Thr-137). A Phosphoserine modification is found at Ser-138. The segment at 185–210 (KAPEEGNNNNDEKEMSTETSEPHKTD) is disordered. Positions 194–210 (NDEKEMSTETSEPHKTD) are enriched in basic and acidic residues. Residues 307-452 (CSIRLLHASA…NLLETLMPMV (146 aa)) enclose the JmjC domain. Fe cation is bound by residues His-353, Asp-355, and His-418.

Belongs to the ROX family. NO66 subfamily. Fe(2+) serves as cofactor.

The protein localises to the nucleus. It catalyses the reaction N(6),N(6)-dimethyl-L-lysyl(36)-[histone H3] + 2 2-oxoglutarate + 2 O2 = L-lysyl(36)-[histone H3] + 2 formaldehyde + 2 succinate + 2 CO2. In terms of biological role, oxygenase that can act as both a histone lysine demethylase and a ribosomal histidine hydroxylase. Specifically demethylates 'Lys-4' (H3K4me) and 'Lys-36' (H3K36me) of histone H3, thereby playing a central role in histone code. In Drosophila sechellia (Fruit fly), this protein is Bifunctional lysine-specific demethylase and histidyl-hydroxylase NO66.